A 147-amino-acid polypeptide reads, in one-letter code: Hemoglobin subunit epsilon (147 aa).

The region spanning 3 to 147 is the Globin domain; it reads HWSAEEKQLI…VAHALPRKYH (145 aa). Residues H64 and H93 each coordinate heme b.

Belongs to the globin family. As to quaternary structure, heterotetramer of two epsilon chains and two alpha chains. In terms of tissue distribution, red blood cells.

Functionally, beta-type chain found in early embryos. This Cairina moschata (Muscovy duck) protein is Hemoglobin subunit epsilon (HBE).